The primary structure comprises 395 residues: General transcription factor IIH subunit 2-like protein (395 aa).

Positions 60–236 (HLYVVVDGSR…HYKELLTHHL (177 aa)) constitute a VWFA domain. At tyrosine 95 the chain carries Phosphotyrosine. A C4-type zinc finger spans residues 291 to 308 (CPQCRAKYCELPVECKIC).

Belongs to the GTF2H2 family.

It localises to the nucleus. In terms of biological role, component of the core-TFIIH basal transcription factor involved in nucleotide excision repair (NER) of DNA and, when complexed to CAK, in RNA transcription by RNA polymerase II. This is General transcription factor IIH subunit 2-like protein (GTF2H2C) from Homo sapiens (Human).